The chain runs to 573 residues: MAALRKRIAELEGRLASQEPAEREEHEEVTHNILDFPGDDHLPDWNDFNNMSLPTSNNTSVGDTETSFSNFIASTTAQSMPMTMASLTSTPVTTASLTTAALMPVVPLTPATTVSIATPQLHTLSGFIPAELDQLYFERVHPAIPLLHQRTYLSWSRKDIKKKSQLCLQHAMWTLAALQSAQYRYLQETLYRSCTQMLTSICLSDSGQDPFDTEQIQAWLLITVYELMRSFHRQAWMSVGRAFRLLQLLRYHELDNPALGIPAGQDFIEREEQRRAFWMAYVLDHLFGVSNNWPITLNELVVCTRLPAFEEDFQSERPVLGSFLSEAITEQTPRYLSAFNETIIFATLCGRRLFYGQQFHVRSAYGDMYSNWSNSTLMLDNILRQRVDILSQCYPPLDEASGPMMHFVSTMAQCSIIYSCTGADMMLRVDEGNAAMQTEYALRAATAAEHVIRLAQMLTRCFVFKVLSFSPPSFTTQHRHTSEKKYTLTRRQQIHPLASIPLMLCAEFLFKNQNVSEKFATLLERLLKEFEQIRDIEDPAQSYIDVMKRWQCSAKNSDRQQRQPSVDSAALSA.

The protein localises to the nucleus. Its function is as follows. Transcription factor that regulates the expression of the gene cluster that mediates the biosynthesis of the mycotoxin ascochitine, an o-quinone methide that plays a possible protective role against other microbial competitors in nature and is considered to be important for pathogenicity of legume-associated Didymella species. The polypeptide is Ascochitine biosynthesis cluster transcriptional regulator (Didymella fabae (Leaf and pod spot disease fungus)).